We begin with the raw amino-acid sequence, 719 residues long: Histone-lysine N-methyltransferase SETDB2 (719 aa).

The span at 72 to 82 shows a compositional bias: polar residues; sequence SQKEVNAQSSD. Residues 72-102 form a disordered region; it reads SQKEVNAQSSDPMPVTQKEQENKSNAFPSTS. The 73-residue stretch at 157–229 folds into the MBD domain; that stretch reads LNLKGENPLQ…DNFSFNTYVQ (73 aa). Positions 291–364 constitute a Pre-SET domain; it reads DSCDCSEGCI…LCQNRVVQHG (74 aa). Residues cysteine 293, cysteine 295, cysteine 299, cysteine 305, cysteine 307, cysteine 345, cysteine 349, cysteine 351, and cysteine 356 each contribute to the Zn(2+) site. Residues 367-694 enclose the SET domain; that stretch reads VRLQVFKTEQ…ARTELTWDYG (328 aa). Residues 377 to 379 and aspartate 418 contribute to the S-adenosyl-L-methionine site; that span reads KGW. Positions 508–547 are disordered; that stretch reads FVSSESVTPEDNDGFKPPREHLNSKTKGAQKDSSSNHVDE. The span at 520-530 shows a compositional bias: basic and acidic residues; that stretch reads DGFKPPREHLN. Positions 532–543 are enriched in polar residues; that stretch reads KTKGAQKDSSSN. Residues arginine 648 and 651-652 each bind S-adenosyl-L-methionine; that span reads NH. Positions 654, 707, 709, and 714 each coordinate Zn(2+).

The protein belongs to the class V-like SAM-binding methyltransferase superfamily. As to expression, ubiquitous. Highest expression in heart, testis and ovary.

The protein localises to the nucleus. Its subcellular location is the chromosome. The catalysed reaction is N(6),N(6)-dimethyl-L-lysyl(9)-[histone H3] + S-adenosyl-L-methionine = N(6),N(6),N(6)-trimethyl-L-lysyl(9)-[histone H3] + S-adenosyl-L-homocysteine + H(+). Histone methyltransferase involved in left-right axis specification in early development and mitosis. Specifically trimethylates 'Lys-9' of histone H3 (H3K9me3). H3K9me3 is a specific tag for epigenetic transcriptional repression that recruits HP1 (CBX1, CBX3 and/or CBX5) proteins to methylated histones. Contributes to H3K9me3 in both the interspersed repetitive elements and centromere-associated repeats. Plays a role in chromosome condensation and segregation during mitosis. The sequence is that of Histone-lysine N-methyltransferase SETDB2 (SETDB2) from Homo sapiens (Human).